Reading from the N-terminus, the 309-residue chain is Cytochrome c biogenesis protein CcsA (309 aa).

Transmembrane regions (helical) follow at residues 18-38, 43-63, 73-93, 102-122, 148-168, 216-236, 250-267, and 279-299; these read LGLL…GAVF, SFAV…QLLF, ISNL…GQLL, IIPS…CFVL, VMLS…VLFI, SILI…VWAN, TWAF…HMRI, and LAST…FLGI.

Belongs to the CcmF/CycK/Ccl1/NrfE/CcsA family. As to quaternary structure, may interact with ccs1.

It is found in the cellular thylakoid membrane. Functionally, required during biogenesis of c-type cytochromes (cytochrome c6 and cytochrome f) at the step of heme attachment. This Prochlorococcus marinus (strain MIT 9301) protein is Cytochrome c biogenesis protein CcsA.